The sequence spans 391 residues: UDP-galactose transporter homolog 1 (391 aa).

5 consecutive transmembrane segments (helical) span residues 3 to 23 (LLQL…WGLL), 52 to 72 (LFLN…YLLV), 126 to 147 (YILI…LRYI), 178 to 198 (YKYA…AFAP), and 207 to 227 (APES…VLDG). The N-linked (GlcNAc...) asparagine glycan is linked to Asn230. The next 4 membrane-spanning stretches (helical) occupy residues 250–270 (MMLV…TLPI), 298–318 (DIIA…ETLE), 323–343 (LTLV…SVVV), and 347–367 (ELSK…GIEA).

This sequence belongs to the nucleotide-sugar transporter family. SLC35B subfamily.

The protein resides in the endoplasmic reticulum membrane. May be involved in specific transport of UDP-Gal from the cytosol to the Golgi lumen. Involved in the maintenance of optimal conditions for the folding of secretory pathway proteins in the endoplasmic reticulum. The chain is UDP-galactose transporter homolog 1 (HUT1) from Mycosarcoma maydis (Corn smut fungus).